Consider the following 280-residue polypeptide: Undecaprenyl-diphosphatase (280 aa).

Transmembrane regions (helical) follow at residues 3-23 (IILL…EFLP), 45-65 (VDLF…YDYW), 88-108 (QLGL…FTFA), 115-135 (LFNP…IFYV), 150-170 (VSLK…IPGT), 191-211 (AEFS…LDFI), 225-245 (VLGI…RLLV), and 255-275 (IFAW…WGFG).

The protein belongs to the UppP family.

It is found in the cell inner membrane. It catalyses the reaction di-trans,octa-cis-undecaprenyl diphosphate + H2O = di-trans,octa-cis-undecaprenyl phosphate + phosphate + H(+). Its function is as follows. Catalyzes the dephosphorylation of undecaprenyl diphosphate (UPP). Confers resistance to bacitracin. The protein is Undecaprenyl-diphosphatase of Psychrobacter cryohalolentis (strain ATCC BAA-1226 / DSM 17306 / VKM B-2378 / K5).